Consider the following 145-residue polypeptide: 3-dehydroquinate dehydratase (145 aa).

Residue Tyr23 is the Proton acceptor of the active site. Residues Asn75, His81, and Asp88 each coordinate substrate. The Proton donor role is filled by His101. Residues 102 to 103 (IS) and Arg112 each bind substrate.

It belongs to the type-II 3-dehydroquinase family. In terms of assembly, homododecamer.

The catalysed reaction is 3-dehydroquinate = 3-dehydroshikimate + H2O. The protein operates within metabolic intermediate biosynthesis; chorismate biosynthesis; chorismate from D-erythrose 4-phosphate and phosphoenolpyruvate: step 3/7. In terms of biological role, catalyzes a trans-dehydration via an enolate intermediate. The protein is 3-dehydroquinate dehydratase of Caldicellulosiruptor bescii (strain ATCC BAA-1888 / DSM 6725 / KCTC 15123 / Z-1320) (Anaerocellum thermophilum).